The following is a 222-amino-acid chain: Glutathione S-transferase A6 (222 aa).

Residues 3–83 enclose the GST N-terminal domain; the sequence is EKPLFHYDEA…YFSSKYNLYG (81 aa). Glutathione-binding positions include Tyr-9, Arg-45, 54–55, and 67–68; these read QV and QT. A GST C-terminal domain is found at 85 to 208; it reads DMKERALIDM…QPGSQRQPPV (124 aa).

The protein belongs to the GST superfamily. Alpha family. As to quaternary structure, homodimer or heterodimer of GSTA1 and GSTA2.

Its subcellular location is the cytoplasm. The catalysed reaction is RX + glutathione = an S-substituted glutathione + a halide anion + H(+). Conjugation of reduced glutathione to a wide number of exogenous and endogenous hydrophobic electrophiles. The polypeptide is Glutathione S-transferase A6 (Gsta6) (Rattus norvegicus (Rat)).